Reading from the N-terminus, the 169-residue chain is MAPKKAKRRAGAEGSSNVFSMFDQTQIQEFKEAFTVIDQNRDGIIDKEDLRDTFAAMGRLNVKNEELDAMMKEASGPINFTVFLTMFGEKLKGADPEDVITGAFKVLDPEGKGTIKKQFLEELLTTQCDRFSQEEIKNMWAAFPPDVGGNVDYKNICYVITHGDAKDQE.

At alanine 2 the chain carries N,N,N-trimethylalanine. Phosphoserine occurs at positions 15 and 16. Threonine 25 and threonine 35 each carry phosphothreonine. Positions threonine 25 to leucine 60 constitute an EF-hand 1 domain. Residues aspartate 38, asparagine 40, aspartate 42, and aspartate 49 each contribute to the Ca(2+) site. Serine 75 bears the Phosphoserine mark. EF-hand domains follow at residues aspartate 95–arginine 130 and phenylalanine 131–lysine 166. At threonine 101 the chain carries Phosphothreonine.

In terms of assembly, myosin is a hexamer of 2 heavy chains and 4 light chains.

Its function is as follows. Myosin regulatory subunit that plays an essential role to maintain muscle integrity during early development. Plays a role in regulation of muscle contraction. In Mus musculus (Mouse), this protein is Myosin regulatory light chain 11 (Myl11).